Here is a 169-residue protein sequence, read N- to C-terminus: 2-C-methyl-D-erythritol 2,4-cyclodiphosphate synthase (169 aa).

Positions 13 and 15 each coordinate a divalent metal cation. Residues Asp-13–His-15 and His-39–Ser-40 contribute to the 4-CDP-2-C-methyl-D-erythritol 2-phosphate site. An a divalent metal cation-binding site is contributed by His-47. Residues Asp-61 to Gly-63, Phe-66 to Asp-70, Phe-144, and Arg-147 each bind 4-CDP-2-C-methyl-D-erythritol 2-phosphate.

This sequence belongs to the IspF family. Homotrimer. A divalent metal cation is required as a cofactor.

It carries out the reaction 4-CDP-2-C-methyl-D-erythritol 2-phosphate = 2-C-methyl-D-erythritol 2,4-cyclic diphosphate + CMP. The protein operates within isoprenoid biosynthesis; isopentenyl diphosphate biosynthesis via DXP pathway; isopentenyl diphosphate from 1-deoxy-D-xylulose 5-phosphate: step 4/6. Involved in the biosynthesis of isopentenyl diphosphate (IPP) and dimethylallyl diphosphate (DMAPP), two major building blocks of isoprenoid compounds. Catalyzes the conversion of 4-diphosphocytidyl-2-C-methyl-D-erythritol 2-phosphate (CDP-ME2P) to 2-C-methyl-D-erythritol 2,4-cyclodiphosphate (ME-CPP) with a corresponding release of cytidine 5-monophosphate (CMP). This chain is 2-C-methyl-D-erythritol 2,4-cyclodiphosphate synthase, found in Cupriavidus necator (strain ATCC 17699 / DSM 428 / KCTC 22496 / NCIMB 10442 / H16 / Stanier 337) (Ralstonia eutropha).